Consider the following 241-residue polypeptide: Small ribosomal subunit protein bS6 (241 aa).

Over residues 97-108 (KPKIRERNRKYT) the composition is skewed to basic residues. Residues 97–241 (KPKIRERNRK…YNNKKPQSSN (145 aa)) are disordered. The span at 109–118 (PRRDRFEKPN) shows a compositional bias: basic and acidic residues. Composition is skewed to low complexity over residues 130–151 (QDQQ…QTSQ) and 161–182 (DDFQ…NQSG). Polar residues predominate over residues 189–202 (RQNQENIHQNSKNH).

Belongs to the bacterial ribosomal protein bS6 family.

In terms of biological role, binds together with bS18 to 16S ribosomal RNA. The polypeptide is Small ribosomal subunit protein bS6 (Mesomycoplasma hyopneumoniae (strain 232) (Mycoplasma hyopneumoniae)).